Reading from the N-terminus, the 284-residue chain is tRNA uridine(34) hydroxylase (284 aa).

Positions Thr-132–Tyr-226 constitute a Rhodanese domain. The Cysteine persulfide intermediate role is filled by Cys-186.

Belongs to the TrhO family.

It catalyses the reaction uridine(34) in tRNA + AH2 + O2 = 5-hydroxyuridine(34) in tRNA + A + H2O. In terms of biological role, catalyzes oxygen-dependent 5-hydroxyuridine (ho5U) modification at position 34 in tRNAs. The protein is tRNA uridine(34) hydroxylase of Burkholderia cenocepacia (strain ATCC BAA-245 / DSM 16553 / LMG 16656 / NCTC 13227 / J2315 / CF5610) (Burkholderia cepacia (strain J2315)).